A 454-amino-acid chain; its full sequence is Photosystem II CP47 reaction center protein (454 aa).

6 helical membrane passes run 6–26, 47–61, 86–102, 149–164, 183–198, and 403–418; these read MFVL…GWTI, IILS…IWHW, GIHL…FGAF, IAAG…FHLS, VLSS…AFVV, and SFAL…HGAR.

Belongs to the PsbB/PsbC family. PsbB subfamily. As to quaternary structure, PSII is composed of 1 copy each of membrane proteins PsbA, PsbB, PsbC, PsbD, PsbE, PsbF, PsbH, PsbI, PsbJ, PsbK, PsbL, PsbM, PsbT, PsbX, PsbY, PsbZ, Psb30/Ycf12, at least 3 peripheral proteins of the oxygen-evolving complex and a large number of cofactors. It forms dimeric complexes. Requires Binds multiple chlorophylls. PSII binds additional chlorophylls, carotenoids and specific lipids. as cofactor.

The protein resides in the plastid. It is found in the chloroplast thylakoid membrane. One of the components of the core complex of photosystem II (PSII). It binds chlorophyll and helps catalyze the primary light-induced photochemical processes of PSII. PSII is a light-driven water:plastoquinone oxidoreductase, using light energy to abstract electrons from H(2)O, generating O(2) and a proton gradient subsequently used for ATP formation. This chain is Photosystem II CP47 reaction center protein, found in Ostreococcus tauri.